The sequence spans 270 residues: uncharacterized protein (270 aa).

This is an uncharacterized protein from Aquifex aeolicus (strain VF5).